The following is a 494-amino-acid chain: Aspartyl/glutamyl-tRNA(Asn/Gln) amidotransferase subunit B (494 aa).

Belongs to the GatB/GatE family. GatB subfamily. As to quaternary structure, heterotrimer of A, B and C subunits.

It catalyses the reaction L-glutamyl-tRNA(Gln) + L-glutamine + ATP + H2O = L-glutaminyl-tRNA(Gln) + L-glutamate + ADP + phosphate + H(+). The catalysed reaction is L-aspartyl-tRNA(Asn) + L-glutamine + ATP + H2O = L-asparaginyl-tRNA(Asn) + L-glutamate + ADP + phosphate + 2 H(+). Its function is as follows. Allows the formation of correctly charged Asn-tRNA(Asn) or Gln-tRNA(Gln) through the transamidation of misacylated Asp-tRNA(Asn) or Glu-tRNA(Gln) in organisms which lack either or both of asparaginyl-tRNA or glutaminyl-tRNA synthetases. The reaction takes place in the presence of glutamine and ATP through an activated phospho-Asp-tRNA(Asn) or phospho-Glu-tRNA(Gln). This Rhodopseudomonas palustris (strain BisB5) protein is Aspartyl/glutamyl-tRNA(Asn/Gln) amidotransferase subunit B.